Consider the following 349-residue polypeptide: GMP reductase (349 aa).

An NADP(+)-binding site is contributed by 108 to 131 (IDFLKIKKIFLLSSELKYICIDVA). Residues glycine 181 and glycine 183 each coordinate K(+). The active-site Thioimidate intermediate is cysteine 186. An NADP(+)-binding site is contributed by 216–239 (IISDGGCTVSGDIAKAFGGGADFV).

The protein belongs to the IMPDH/GMPR family. GuaC type 1 subfamily. In terms of assembly, homotetramer.

The catalysed reaction is IMP + NH4(+) + NADP(+) = GMP + NADPH + 2 H(+). Catalyzes the irreversible NADPH-dependent deamination of GMP to IMP. It functions in the conversion of nucleobase, nucleoside and nucleotide derivatives of G to A nucleotides, and in maintaining the intracellular balance of A and G nucleotides. This Buchnera aphidicola subsp. Acyrthosiphon pisum (strain 5A) protein is GMP reductase.